The chain runs to 186 residues: Dynactin subunit 3 (186 aa).

An N-acetylalanine modification is found at Ala-2. The stretch at 46–66 (NIASKRERVKILYKKIEDLIK) forms a coiled coil.

This sequence belongs to the dynactin subunit 3 family. As to quaternary structure, subunit of dynactin, a multiprotein complex part of a tripartite complex with dynein and a adapter, such as BICDL1, BICD2 or HOOK3. The dynactin complex is built around ACTR1A/ACTB filament and consists of an actin-related filament composed of a shoulder domain, a pointed end and a barbed end. Its length is defined by its flexible shoulder domain. The soulder is composed of 2 DCTN1 subunits, 4 DCTN2 and 2 DCTN3. The 4 DCNT2 (via N-terminus) bind the ACTR1A filament and act as molecular rulers to determine the length. The pointed end is important for binding dynein-dynactin cargo adapters. Consists of 4 subunits: ACTR10, DCNT4, DCTN5 and DCTN6. The barbed end is composed of a CAPZA1:CAPZB heterodimers, which binds ACTR1A/ACTB filament and dynactin and stabilizes dynactin.

The protein localises to the cytoplasm. Its subcellular location is the cytoskeleton. The protein resides in the microtubule organizing center. It is found in the centrosome. It localises to the chromosome. The protein localises to the centromere. Its subcellular location is the kinetochore. The protein resides in the spindle. It is found in the cleavage furrow. It localises to the midbody. Its function is as follows. Part of the dynactin complex that activates the molecular motor dynein for ultra-processive transport along microtubules. Together with dynein may be involved in spindle assembly and cytokinesis. This is Dynactin subunit 3 from Mus musculus (Mouse).